A 204-amino-acid chain; its full sequence is COBRA-like protein 5 (204 aa).

An N-terminal signal peptide occupies residues 1-24 (MESLFSTMIVLLLVSFSCLISTEA). 2 N-linked (GlcNAc...) asparagine glycosylation sites follow: Asn-31 and Asn-195.

This sequence belongs to the COBRA family. In terms of tissue distribution, expressed in roots, stems, leaves, flowers and siliques.

The protein is COBRA-like protein 5 (COBL5) of Arabidopsis thaliana (Mouse-ear cress).